A 737-amino-acid chain; its full sequence is Elongation factor 2 (737 aa).

Positions 18–262 (TRVRNIGIIA…AVIKFVPNPR (245 aa)) constitute a tr-type G domain. GTP is bound by residues 27–34 (AHVDHGKT), 93–97 (DTPGH), and 147–150 (NKVD). His604 bears the Diphthamide mark.

The protein belongs to the TRAFAC class translation factor GTPase superfamily. Classic translation factor GTPase family. EF-G/EF-2 subfamily.

The protein localises to the cytoplasm. Functionally, catalyzes the GTP-dependent ribosomal translocation step during translation elongation. During this step, the ribosome changes from the pre-translocational (PRE) to the post-translocational (POST) state as the newly formed A-site-bound peptidyl-tRNA and P-site-bound deacylated tRNA move to the P and E sites, respectively. Catalyzes the coordinated movement of the two tRNA molecules, the mRNA and conformational changes in the ribosome. In Sulfolobus acidocaldarius (strain ATCC 33909 / DSM 639 / JCM 8929 / NBRC 15157 / NCIMB 11770), this protein is Elongation factor 2 (fusA).